Here is a 341-residue protein sequence, read N- to C-terminus: Adenosine deaminase (341 aa).

H15 and H17 together coordinate Zn(2+). Residues H17, D19, and G172 each contribute to the substrate site. H199 contacts Zn(2+). Catalysis depends on E202, which acts as the Proton donor. D279 is a binding site for Zn(2+).

The protein belongs to the metallo-dependent hydrolases superfamily. Adenosine and AMP deaminases family. Adenosine deaminase subfamily. It depends on Zn(2+) as a cofactor.

It carries out the reaction adenosine + H2O + H(+) = inosine + NH4(+). It catalyses the reaction 2'-deoxyadenosine + H2O + H(+) = 2'-deoxyinosine + NH4(+). Catalyzes the hydrolytic deamination of adenosine and 2-deoxyadenosine. The chain is Adenosine deaminase from Streptococcus equi subsp. zooepidemicus (strain MGCS10565).